The sequence spans 353 residues: Guanine nucleotide-binding protein alpha-1 subunit (353 aa).

Positions 1–26 are disordered; that stretch reads MGCGMSTEEKEGKARNEEIENQLKRD. Gly2 is lipidated: N-myristoyl glycine. Residue Cys3 is the site of S-palmitoyl cysteine attachment. Residues 7 to 26 are compositionally biased toward basic and acidic residues; the sequence is TEEKEGKARNEEIENQLKRD. The G-alpha domain maps to 32–353; sequence NEIKMLLLGA…QENLRLCGLI (322 aa). The interval 35–48 is G1 motif; sequence KMLLLGAGESGKST. Residues Glu43, Ser44, Gly45, Lys46, Ser47, Thr48, Asp150, Leu175, Thr181, Gly203, Asn269, Lys270, Asp272, and Ala325 each coordinate GTP. A Mg(2+)-binding site is contributed by Ser47. The interval 173–181 is G2 motif; that stretch reads DVLRSRVKT. Thr181 is a Mg(2+) binding site. Residues 196 to 205 are G3 motif; it reads YRMFDVGGQR. Residues 265–272 are G4 motif; it reads ILFLNKID. The interval 323–328 is G5 motif; that stretch reads TCATDT.

It belongs to the G-alpha family. G(q) subfamily. G proteins are composed of 3 units; alpha, beta and gamma. The alpha chain contains the guanine nucleotide binding site. Mg(2+) serves as cofactor.

Functionally, guanine nucleotide-binding proteins (G proteins) are involved as modulators or transducers in various transmembrane signaling systems. The sequence is that of Guanine nucleotide-binding protein alpha-1 subunit (gna-1) from Neurospora crassa (strain ATCC 24698 / 74-OR23-1A / CBS 708.71 / DSM 1257 / FGSC 987).